Consider the following 515-residue polypeptide: MSKLGQEKNEVNYSDVREDRVVTNSTGNPINEPFVTQRIGEHGPLLLQDYNLIDSLAHFNRENIPQRNPHAHGSGAFGYFEVTDDITDICGSAMFSKIGKRTKCLTRFSTVGGDKGSADTVRDPRGFATKFYTEEGNLDWVYNNTPVFFIRDPSKFPHFIHTQKRNPQTNLRDADMFWDFLTTPENQVAIHQVMILFSDRGTPANYRSMHGYSGHTYKWSNKNGDWHYVQVHIKTDQGIKNLTIEEATKIAGSNPDYCQQDLFEAIQNGNYPSWTVYIQTMTERDAKKLPFSVFDLTKVWPQGQFPLRRVGKIVLNENPLNFFAQVEQAAFAPSTTVPYQEASADPVLQARLFSYADAHRYRLGPNFHQIPVNCPYASKFFNPAIRDGPMNVNGNFGSEPTYLANDKSYTYIQQDRPIQQHQEVWNGPAIPYHWATSPGDVDFVQARNLYRVLGKQPGQQKNLAYNIGIHVEGACPQIQQRVYDMFARVDKGLSEAIKKVAEAKHASELSSNSKF.

The residue at position 2 (Ser-2) is an N-acetylserine. Residues His-70 and Asn-143 contribute to the active site. Tyr-355 contacts heme. Positions 513 to 515 match the Microbody targeting signal motif; sequence SKF.

Belongs to the catalase family. Homotetramer. Heme is required as a cofactor.

It is found in the peroxisome matrix. It carries out the reaction 2 H2O2 = O2 + 2 H2O. Its function is as follows. Catalyzes the degradation of hydrogen peroxide (H(2)O(2)) generated by peroxisomal oxidases to water and oxygen, thereby protecting cells from the toxic effects of hydrogen peroxide. This Saccharomyces cerevisiae (strain ATCC 204508 / S288c) (Baker's yeast) protein is Peroxisomal catalase A (CTA1).